The primary structure comprises 475 residues: MAAGALRGLPVAGGGESSESEDDCWEIGYLDRTSQKLKGLLPIEEKKEKFKKAMTIGDVSLIQELLDSGISVDSTFQYGWTPLMYAASVANAELVRVLLDSGANASFEKDKQTILITACSARGSEEQILKCVELLLSRNADPNVACRRLMTPIMYAARDGHTQVVALLVAHGAEVNTQDENGYTALTWAARQGHKNIVLKLLELGANKMLQTKDGKMPSEIAKRNKHHEIFNLLSFTLNPLEGKLQQLTKEDTICKILTTDSDREKDHIFSSYTAFGDLEVFLHGIGLEHLTDLLKERDITLRHLLTMREDEFTKNGITSEDQQKILATLKELQVEEIQFGELSEEIKLEISGDEFLNFLLKLNKQCGHLITAVQNIITELPVNSQKITLEWASPRNFTSVCEELVNNVEDLSEEVCKLKDVIQKLQNERENDPTHIQLREEVSTWNSRILKRTAITVCGFGFLLFICKLTFQRK.

The interval 1–22 (MAAGALRGLPVAGGGESSESED) is disordered. S17, S18, and S20 each carry phosphoserine. 6 ANK repeats span residues 45–74 (EKKE…SVDS), 78–107 (YGWT…NASF), 110–144 (DKQT…DPNV), 148–177 (RLMT…EVNT), 181–210 (NGYT…NKML), and 214–243 (DGKM…PLEG). One can recognise an SAM domain in the interval 272 to 334 (SYTAFGDLEV…KILATLKELQ (63 aa)).

As to quaternary structure, interacts with DDX4, PIWIL1, RANBP9 and TDRD1.

The protein localises to the cytoplasm. Plays a central role during spermatogenesis by repressing transposable elements and preventing their mobilization, which is essential for the germline integrity. Acts via the piRNA metabolic process, which mediates the repression of transposable elements during meiosis by forming complexes composed of piRNAs and Piwi proteins and governs the methylation and subsequent repression of transposons. Its association with pi-bodies suggests a participation in the primary piRNAs metabolic process. Required prior to the pachytene stage to facilitate the production of multiple types of piRNAs, including those associated with repeats involved in the regulation of retrotransposons. May act by mediating protein-protein interactions during germ cell maturation. The sequence is that of Ankyrin repeat, SAM and basic leucine zipper domain-containing protein 1 (ASZ1) from Colobus guereza (Mantled guereza).